The chain runs to 99 residues: MANNNSAKKRIQIAERNRIQNRTYKSAMRTLMKRCFEACGAYSEKPSEDAKKDIQNSMNDAFSKIDKAVKTGVLHRNTGANQKSRLTSVVKKTIEPVVK.

This sequence belongs to the bacterial ribosomal protein bS20 family.

Binds directly to 16S ribosomal RNA. This Prochlorococcus marinus (strain SARG / CCMP1375 / SS120) protein is Small ribosomal subunit protein bS20.